We begin with the raw amino-acid sequence, 365 residues long: MNVIDLFKKLLSFKSVTPDDDGGMEFIKEYLKGFEVIESEKEGVKNLFIYKKFGEGDHLCFGGHIDVVPPGEGWNTDPFTPTEKEGFIYARGAQDMKSGLAAFLWAMKNAKNFKGTLSALITSDEEGDAVWGTKYMLEILKDKNLIPDYAIVAEPTCEKVFGDAIKIGRRGSINGVLKKIGLQGHAAYPEKSINPIHKVAQVLHKIAGVDLDDGDEFFAPSKFVVTDIRAGMEVTNVTPGELKMMFNVRNNTHTDKEKIKNFIHEHFKDMNYTLELKQSAEPFVTNPDTKVVKALDRAIKNHTNITPQHSTAGGTSDARFFAKHGVKVVEFGVKNDTIHAPNERTTPEEVNKLADIFKEVIEEWN.

H64 contacts Zn(2+). The active site involves D66. D95 contributes to the Zn(2+) binding site. The active-site Proton acceptor is E125. Zn(2+) is bound by residues E126, E154, and H339.

Belongs to the peptidase M20A family. DapE subfamily. Homodimer. Zn(2+) is required as a cofactor. Requires Co(2+) as cofactor.

It carries out the reaction N-succinyl-(2S,6S)-2,6-diaminopimelate + H2O = (2S,6S)-2,6-diaminopimelate + succinate. Its pathway is amino-acid biosynthesis; L-lysine biosynthesis via DAP pathway; LL-2,6-diaminopimelate from (S)-tetrahydrodipicolinate (succinylase route): step 3/3. Functionally, catalyzes the hydrolysis of N-succinyl-L,L-diaminopimelic acid (SDAP), forming succinate and LL-2,6-diaminopimelate (DAP), an intermediate involved in the bacterial biosynthesis of lysine and meso-diaminopimelic acid, an essential component of bacterial cell walls. The protein is Succinyl-diaminopimelate desuccinylase of Nautilia profundicola (strain ATCC BAA-1463 / DSM 18972 / AmH).